A 254-amino-acid polypeptide reads, in one-letter code: UPF0246 protein FTH_1656 (254 aa).

It belongs to the UPF0246 family.

In Francisella tularensis subsp. holarctica (strain OSU18), this protein is UPF0246 protein FTH_1656.